We begin with the raw amino-acid sequence, 179 residues long: Large ribosomal subunit protein uL5 (179 aa).

Belongs to the universal ribosomal protein uL5 family. As to quaternary structure, part of the 50S ribosomal subunit; part of the 5S rRNA/L5/L18/L25 subcomplex. Contacts the 5S rRNA and the P site tRNA. Forms a bridge to the 30S subunit in the 70S ribosome.

Functionally, this is one of the proteins that bind and probably mediate the attachment of the 5S RNA into the large ribosomal subunit, where it forms part of the central protuberance. In the 70S ribosome it contacts protein S13 of the 30S subunit (bridge B1b), connecting the 2 subunits; this bridge is implicated in subunit movement. Contacts the P site tRNA; the 5S rRNA and some of its associated proteins might help stabilize positioning of ribosome-bound tRNAs. The polypeptide is Large ribosomal subunit protein uL5 (Serratia proteamaculans (strain 568)).